We begin with the raw amino-acid sequence, 652 residues long: Capsid protein (652 aa).

Residues methionine 1–asparagine 11 show a composition bias toward polar residues. A disordered region spans residues methionine 1–glycine 70. Residues threonine 34–glycine 47 are compositionally biased toward low complexity.

It localises to the virion. In terms of biological role, the capsid protein self-assembles to form an icosahedral capsid with a T=2 symmetry made of 120 subunits. This chain is Capsid protein, found in Atkinsonella hypoxylon virus (isolate 2H) (AhV).